The following is a 145-amino-acid chain: Large ribosomal subunit protein uL15 (145 aa).

The segment covering 1-18 (MKLHELKYTEGSKKDVTR) has biased composition (basic and acidic residues). A disordered region spans residues 1–51 (MKLHELKYTEGSKKDVTRVGRGMASGKGKTSTRGHKGQNSRSGGGVRVGFE). Residues 42-51 (SGGGVRVGFE) are compositionally biased toward gly residues.

Belongs to the universal ribosomal protein uL15 family. As to quaternary structure, part of the 50S ribosomal subunit.

In terms of biological role, binds to the 23S rRNA. This Mesoplasma florum (strain ATCC 33453 / NBRC 100688 / NCTC 11704 / L1) (Acholeplasma florum) protein is Large ribosomal subunit protein uL15.